A 251-amino-acid polypeptide reads, in one-letter code: Small ribosomal subunit protein uS2 (251 aa).

The protein belongs to the universal ribosomal protein uS2 family.

The sequence is that of Small ribosomal subunit protein uS2 from Synechococcus sp. (strain ATCC 27144 / PCC 6301 / SAUG 1402/1) (Anacystis nidulans).